Here is a 343-residue protein sequence, read N- to C-terminus: MLLLKKQTEDISSVYEIREKLGSGAFSEVMLAQERGSAHLVALKCIPKKALRGKEALVENEIAVLRRISHPNIVALEDVHESPSHLYLAMELVTGGELFDRIMERGSYTEKDASHLVGQVLGAVSYLHSLGIVHRDLKPENLLYATPFEDSKIMVSDFGLSKIQAGNMLGTACGTPGYVAPELLEQKPYGKAVDVWALGVISYILLCGYPPFYDESDPELFSQILRASYEFDSPFWDDISESAKDFIRHLLERDPQKRFTCQQALQHLWISGDAALDRDILGSVSEQIQKNFARTHWKRAFNATSFLRHIRKLGQSPEGEEASRQGMTRHSHPGLGTSQSPKW.

The Protein kinase domain maps to 15–270 (YEIREKLGSG…CQQALQHLWI (256 aa)). Residues 21-29 (LGSGAFSEV) and Lys44 each bind ATP. Asp136 acts as the Proton acceptor in catalysis. A calmodulin-binding region spans residues 290–311 (KNFARTHWKRAFNATSFLRHIR). Positions 314–343 (GQSPEGEEASRQGMTRHSHPGLGTSQSPKW) are disordered. Ser338 carries the post-translational modification Phosphoserine.

It belongs to the protein kinase superfamily. CAMK Ser/Thr protein kinase family. CaMK subfamily. Post-translationally, isoform 1 and isoform 2 are phosphorylated by CAMKK1. Isoform 1 is expressed in liver, heart, lung, kidney, spleen and testis. Isoform 2 is predominantly expressed in cerebrum and cerebellum.

Its subcellular location is the cytoplasm. It localises to the nucleus. It catalyses the reaction L-seryl-[protein] + ATP = O-phospho-L-seryl-[protein] + ADP + H(+). It carries out the reaction L-threonyl-[protein] + ATP = O-phospho-L-threonyl-[protein] + ADP + H(+). Its activity is regulated as follows. Activated by Ca(2+)/calmodulin. Must be phosphorylated to be maximally active. Activated by CAMKK1. In terms of biological role, calcium/calmodulin-dependent protein kinase belonging to a proposed calcium-triggered signaling cascade. In vitro, isoform 1 and isoform 2 phosphorylate CREB1, SYN1/synapsin I. Phosphorylates and activates CAMK1. The polypeptide is Calcium/calmodulin-dependent protein kinase type 1B (Pnck) (Rattus norvegicus (Rat)).